The following is a 705-amino-acid chain: Elongation factor G (705 aa).

The region spanning 8 to 290 is the tr-type G domain; that stretch reads EKYRNIGICA…GVVEYLPAPN (283 aa). GTP is bound by residues 17–24, 88–92, and 142–145; these read AHVDAGKT, DTPGH, and NKMD.

The protein belongs to the TRAFAC class translation factor GTPase superfamily. Classic translation factor GTPase family. EF-G/EF-2 subfamily.

It localises to the cytoplasm. Functionally, catalyzes the GTP-dependent ribosomal translocation step during translation elongation. During this step, the ribosome changes from the pre-translocational (PRE) to the post-translocational (POST) state as the newly formed A-site-bound peptidyl-tRNA and P-site-bound deacylated tRNA move to the P and E sites, respectively. Catalyzes the coordinated movement of the two tRNA molecules, the mRNA and conformational changes in the ribosome. This Francisella philomiragia subsp. philomiragia (strain ATCC 25017 / CCUG 19701 / FSC 153 / O#319-036) protein is Elongation factor G.